We begin with the raw amino-acid sequence, 100 residues long: Tetrahydromethanopterin S-methyltransferase subunit B (100 aa).

The helical transmembrane segment at 80–100 threads the bilayer; sequence KLTNIVYGFILGLIILFALLL.

It belongs to the MtrB family. The complex is composed of 8 subunits; MtrA, MtrB, MtrC, MtrD, MtrE, MtrF, MtrG and MtrH.

It is found in the cell membrane. It carries out the reaction 5-methyl-5,6,7,8-tetrahydromethanopterin + coenzyme M + 2 Na(+)(in) = 5,6,7,8-tetrahydromethanopterin + methyl-coenzyme M + 2 Na(+)(out). It functions in the pathway one-carbon metabolism; methanogenesis from CO(2); methyl-coenzyme M from 5,10-methylene-5,6,7,8-tetrahydromethanopterin: step 2/2. In terms of biological role, part of a complex that catalyzes the formation of methyl-coenzyme M and tetrahydromethanopterin from coenzyme M and methyl-tetrahydromethanopterin. This is an energy-conserving, sodium-ion translocating step. This is Tetrahydromethanopterin S-methyltransferase subunit B from Methanothermobacter marburgensis (strain ATCC BAA-927 / DSM 2133 / JCM 14651 / NBRC 100331 / OCM 82 / Marburg) (Methanobacterium thermoautotrophicum).